The following is a 471-amino-acid chain: Glutamate--tRNA ligase 1 (471 aa).

The 'HIGH' region signature appears at 10 to 20; it reads PSPTGFLHIGG. Positions 113-140 are disordered; that stretch reads ARKEGRPPRYDGRWRDRDPSEAPKDRDP. The short motif at 239–243 is the 'KMSKS' region element; it reads KLSKR. K242 provides a ligand contact to ATP.

Belongs to the class-I aminoacyl-tRNA synthetase family. Glutamate--tRNA ligase type 1 subfamily. As to quaternary structure, monomer.

The protein resides in the cytoplasm. The enzyme catalyses tRNA(Glu) + L-glutamate + ATP = L-glutamyl-tRNA(Glu) + AMP + diphosphate. Catalyzes the attachment of glutamate to tRNA(Glu) in a two-step reaction: glutamate is first activated by ATP to form Glu-AMP and then transferred to the acceptor end of tRNA(Glu). The sequence is that of Glutamate--tRNA ligase 1 from Xanthobacter autotrophicus (strain ATCC BAA-1158 / Py2).